The primary structure comprises 277 residues: F420-dependent methylenetetrahydromethanopterin dehydrogenase (277 aa).

It belongs to the MTD family.

It carries out the reaction 5,10-methylenetetrahydromethanopterin + oxidized coenzyme F420-(gamma-L-Glu)(n) + 2 H(+) = 5,10-methenyl-5,6,7,8-tetrahydromethanopterin + reduced coenzyme F420-(gamma-L-Glu)(n). It functions in the pathway one-carbon metabolism; methanogenesis from CO(2); 5,10-methylene-5,6,7,8-tetrahydromethanopterin from 5,10-methenyl-5,6,7,8-tetrahydromethanopterin (coenzyme F420 route): step 1/1. Catalyzes the reversible reduction of methenyl-H(4)MPT(+) to methylene-H(4)MPT. The chain is F420-dependent methylenetetrahydromethanopterin dehydrogenase from Methanococcus maripaludis (strain C7 / ATCC BAA-1331).